The sequence spans 1531 residues: La-related protein Larp4B (1531 aa).

The segment covering 112–147 has biased composition (low complexity); it reads HTHVAHQQQQQQQQQTIQQHLHQQQQQQSPHPAQHL. 2 disordered regions span residues 112–148 and 239–263; these read HTHV…QHLT and QLPA…EPNI. Residues 262–351 form the HTH La-type RNA-binding domain; it reads NIPLDKLKQM…RPNRKRCIII (90 aa). The region spanning 348-423 is the RRM domain; it reads CIIILREISN…KPIMARIKPK (76 aa). Disordered stretches follow at residues 533–605, 710–736, 748–768, 791–1135, 1160–1211, and 1251–1285; these read PLPP…QGGN, AHSH…ASSS, TAPA…QQTQ, QEAG…SNQQ, DVVR…TPAL, and ASSK…QPSQ. Positions 565-578 are enriched in low complexity; that stretch reads YNNNHRGNPNNVGG. Composition is skewed to low complexity over residues 754–768 and 810–826; these read QPGQ…QQTQ and SSNM…TSMS. Residues 860–884 show a composition bias toward polar residues; that stretch reads SSPSNPHPQQHLMSSSTGSNVQSAG. The segment covering 945–959 has biased composition (low complexity); it reads ALSSQQQQHHLTTGT. A compositionally biased stretch (basic residues) spans 966–975; sequence HHYHHHHHHN. Positions 983–1004 are enriched in gly residues; that stretch reads NSGGLGVSSGGSGGGGSGGGSG. The segment covering 1031–1045 has biased composition (low complexity); sequence HQQQQQQQQQQQQQQ. The span at 1068 to 1086 shows a compositional bias: polar residues; it reads TSATAPHTPQATGGASLHN. Residues 1087–1115 are compositionally biased toward low complexity; the sequence is STTSSSSSTGLGQKQTLHQQQQQAPQQHQ. Phosphoserine is present on Ser-1123. Residues 1164-1173 show a composition bias toward gly residues; that stretch reads TGGGGGGGGK. Residues 1183–1200 show a composition bias toward polar residues; the sequence is PQGQNQPHMAPNYQQHQP. Residues 1270-1280 are compositionally biased toward basic and acidic residues; sequence KSNKTEDEMHP. Phosphoserine is present on residues Ser-1370 and Ser-1413. 2 disordered regions span residues 1393 to 1418 and 1450 to 1531; these read KAAA…TGSH and GGAS…ANNS. 2 stretches are compositionally biased toward polar residues: residues 1467–1477 and 1502–1515; these read ATNTTQGSSAV and QHYG…TNAN.

Its function is as follows. Probable RNA binding protein. Negatively regulates myc at the protein level, via an unknown mechanism, and may therefore have a role in growth. Has no effect on myc mRNA levels. The sequence is that of La-related protein Larp4B from Drosophila melanogaster (Fruit fly).